Reading from the N-terminus, the 506-residue chain is Maturase K (506 aa).

This sequence belongs to the intron maturase 2 family. MatK subfamily.

Its subcellular location is the plastid. It localises to the chloroplast. Its function is as follows. Usually encoded in the trnK tRNA gene intron. Probably assists in splicing its own and other chloroplast group II introns. This is Maturase K from Artanema fimbriatum.